The sequence spans 321 residues: o-succinylbenzoate synthase (321 aa).

Lys-134 functions as the Proton donor in the catalytic mechanism. Asp-162, Glu-191, and Asp-214 together coordinate Mg(2+). Lys-236 acts as the Proton acceptor in catalysis.

Belongs to the mandelate racemase/muconate lactonizing enzyme family. MenC type 1 subfamily. A divalent metal cation is required as a cofactor.

It catalyses the reaction (1R,6R)-6-hydroxy-2-succinyl-cyclohexa-2,4-diene-1-carboxylate = 2-succinylbenzoate + H2O. Its pathway is quinol/quinone metabolism; 1,4-dihydroxy-2-naphthoate biosynthesis; 1,4-dihydroxy-2-naphthoate from chorismate: step 4/7. It functions in the pathway quinol/quinone metabolism; menaquinone biosynthesis. Converts 2-succinyl-6-hydroxy-2,4-cyclohexadiene-1-carboxylate (SHCHC) to 2-succinylbenzoate (OSB). The protein is o-succinylbenzoate synthase of Klebsiella pneumoniae (strain 342).